Consider the following 604-residue polypeptide: Prostaglandin G/H synthase 2 (604 aa).

The first 17 residues, 1 to 17, serve as a signal peptide directing secretion; that stretch reads MLARAGLLCASLSPPHA. The EGF-like domain maps to 18 to 55; that stretch reads ANPCCSNPCQNQGVCMSIGFDQYMCDCSRTGFYGENCS. Intrachain disulfides connect Cys21–Cys32, Cys22–Cys145, Cys26–Cys42, and Cys44–Cys54. Asn53 is a glycosylation site (N-linked (GlcNAc...) asparagine). Residue Arg106 participates in substrate binding. The N-linked (GlcNAc...) asparagine glycan is linked to Asn130. The active-site Proton acceptor is His193. A substrate-binding site is contributed by Tyr341. Tyr371 serves as the catalytic For cyclooxygenase activity. Position 374 (His374) interacts with heme b. The N-linked (GlcNAc...) asparagine glycan is linked to Asn396. The residue at position 526 (Cys526) is an S-nitrosocysteine. A disulfide bridge links Cys555 with Cys561. Residue Asn580 is glycosylated (N-linked (GlcNAc...) asparagine).

Belongs to the prostaglandin G/H synthase family. As to quaternary structure, homodimer. Heme b is required as a cofactor. S-nitrosylation by NOS2 (iNOS) activates enzyme activity. S-nitrosylation may take place on different Cys residues in addition to Cys-526.

Its subcellular location is the microsome membrane. The protein resides in the endoplasmic reticulum membrane. The protein localises to the nucleus inner membrane. It is found in the nucleus outer membrane. It catalyses the reaction (5Z,8Z,11Z,14Z)-eicosatetraenoate + AH2 + 2 O2 = prostaglandin H2 + A + H2O. The enzyme catalyses (5Z,8Z,11Z,14Z)-eicosatetraenoate + 2 O2 = prostaglandin G2. It carries out the reaction prostaglandin G2 + AH2 = prostaglandin H2 + A + H2O. The catalysed reaction is (5Z,8Z,11Z,14Z,17Z)-eicosapentaenoate + 2 O2 = prostaglandin G3. It catalyses the reaction prostaglandin G3 + AH2 = prostaglandin H3 + A + H2O. The enzyme catalyses (8Z,11Z,14Z)-eicosatrienoate + 2 O2 = prostaglandin G1. It carries out the reaction prostaglandin G1 + AH2 = prostaglandin H1 + A + H2O. The catalysed reaction is 2-(5Z,8Z,11Z,14Z)-eicosatetraenoyl-sn-glycero-3-phosphoethanolamine + 2 O2 = 2-(prostaglandin G2)-sn-glycero-3-phosphoethanolamine. It catalyses the reaction 2-(prostaglandin G2)-sn-glycero-3-phosphoethanolamine + AH2 = 2-(prostaglandin H2)-sn-glycero-3-phosphoethanolamine + A + H2O. The enzyme catalyses 2-(5Z,8Z,11Z,14Z)-eicosatetraenoyl-sn-glycero-3-phosphocholine + 2 O2 = 2-(prostaglandin G2)-sn-glycero-3-phosphocholine. It carries out the reaction 2-(prostaglandin G2)-sn-glycero-3-phosphocholine + AH2 = 2-(prostaglandin H2)-sn-glycero-3-phosphocholine + A + H2O. The catalysed reaction is (15S)-hydroperoxy-(5Z,8Z,11Z,13E)-eicosatetraenoate + AH2 = (15S)-hydroxy-(5Z,8Z,11Z,13E)-eicosatetraenoate + A + H2O. It catalyses the reaction 2-(5Z,8Z,11Z,14Z)-eicosatetraenoyl-sn-glycero-3-phosphocholine + AH2 + O2 = 2-[(15S)-hydroxy-(5Z,8Z,11Z,13E)-eicosatetraenoyl]-sn-glycero-3-phosphocholine + A + H2O. The enzyme catalyses 2-(5Z,8Z,11Z,14Z)-eicosatetraenoyl-sn-glycero-3-phosphocholine + AH2 + O2 = 2-[(15R)-hydroxy-(5Z,8Z,11Z,13E)-eicosatetraenoyl]-sn-glycero-3-phosphocholine + A + H2O. It carries out the reaction 2-(5Z,8Z,11Z,14Z)-eicosatetraenoyl-sn-glycero-3-phosphocholine + AH2 + O2 = 2-[(11R)-hydroxy-(5Z,8Z,12E,14Z)-eicosatetraenoyl]-sn-glycero-3-phosphocholine + A + H2O. The catalysed reaction is (9Z,12Z)-octadecadienoate + AH2 + O2 = 9-hydroxy-(10E,12Z)-octadecadienoate + A + H2O. It catalyses the reaction (9Z,12Z)-octadecadienoate + AH2 + O2 = 13-hydroxy-(9Z,11E)-octadecadienoate + A + H2O. The enzyme catalyses (5Z,8Z,11Z,14Z)-eicosatetraenoate + AH2 + O2 = (15R)-hydroxy-(5Z,8Z,11Z,13E)-eicosatetraenoate + A + H2O. It carries out the reaction (5Z,8Z,11Z,14Z)-eicosatetraenoate + AH2 + O2 = (11R)-hydroxy-(5Z,8Z,12E,14Z)-eicosatetraenoate + A + H2O. The catalysed reaction is (5Z,8Z,11Z,14Z,17Z)-eicosapentaenoate + AH2 + O2 = (11R)-hydroxy-(5Z,8Z,12E,14Z,17Z)-eicosapentaenoate + A + H2O. It catalyses the reaction (5Z,8Z,11Z,14Z,17Z)-eicosapentaenoate + AH2 + O2 = (18S)-hydroxy-(5Z,8Z,11Z,14Z,16E)-eicosapentaenoate + A + H2O. The enzyme catalyses (5Z,8Z,11Z,14Z,17Z)-eicosapentaenoate + AH2 + O2 = (18R)-hydroxy-(5Z,8Z,11Z,14Z,16E)-eicosapentaenoate + A + H2O. It carries out the reaction (5Z,8Z,11Z,14Z,17Z)-eicosapentaenoate + AH2 + O2 = (15R)-hydroxy-(5Z,8Z,11Z,13E,17Z)-eicosapentaenoate + A + H2O. The catalysed reaction is (5Z,8Z,11Z,14Z,17Z)-eicosapentaenoate + AH2 + O2 = (15S)-hydroxy-(5Z,8Z,11Z,13E,17Z)-eicosapentaenoate + A + H2O. It catalyses the reaction (7Z,10Z,13Z,16Z,19Z)-docosapentaenoate + AH2 + O2 = 13R-hydroxy-(7Z,10Z,14E,16Z,19Z)-docosapentaenoate + A + H2O. The enzyme catalyses (4Z,7Z,10Z,13Z,16Z,19Z)-docosahexaenoate + AH2 + O2 = 13-hydroxy-(4Z,7Z,10Z,14E,16Z,19Z)-docosahexaenoate + A + H2O. It carries out the reaction (5S)-hydroxy-(6E,8Z,11Z,14Z)-eicosatetraenoate + AH2 + O2 = (5S,15R)-dihydroxy-(6E,8Z,11Z,13E)-eicosatetraenoate + A + H2O. The catalysed reaction is (4Z,7Z,10Z,13Z,16Z,19Z)-docosahexaenoate + AH2 + O2 = 17R-hydroxy-(4Z,7Z,10Z,13Z,15E,19Z)-docosahexaenoate + A + H2O. It catalyses the reaction (5S)-hydroxy-(6E,8Z,11Z,14Z)-eicosatetraenoate + AH2 + O2 = (5S,15S)-dihydroxy-(6E,8Z,11Z,13E)-eicosatetraenoate + A + H2O. The enzyme catalyses (5S)-hydroxy-(6E,8Z,11Z,14Z)-eicosatetraenoate + AH2 + O2 = (5S,11R)-dihydroxy-(6E,8Z,12E,14Z)-eicosatetraenoate + A + H2O. It carries out the reaction 2-(5Z,8Z,11Z,14Z-eicosatetraenoyl)-glycerol + 2 O2 = 2-glyceryl-prostaglandin G2. The catalysed reaction is 2-glyceryl-prostaglandin G2 + AH2 = 2-glyceryl-prostaglandin H2 + A + H2O. It catalyses the reaction (5Z,8Z,11Z,14Z)-eicosatetraenoate + O2 = (15R)-hydroperoxy-(5Z,8Z,11Z,13E)-eicosatetraenoate. The enzyme catalyses (5Z,8Z,11Z,14Z)-eicosatetraenoate + O2 = 11R-hydroperoxy-(5Z,8Z,12E,14Z)-eicosatetraenoate. It carries out the reaction (9Z,12Z)-octadecadienoate + AH2 + O2 = (9R)-hydroxy-(10E,12Z)-octadecadienoate + A + H2O. The catalysed reaction is (9Z,12Z)-octadecadienoate + AH2 + O2 = (9S)-hydroxy-(10E,12Z)-octadecadienoate + A + H2O. It catalyses the reaction (9Z,12Z)-octadecadienoate + AH2 + O2 = (13S)-hydroxy-(9Z,11E)-octadecadienoate + A + H2O. The enzyme catalyses (9Z,12Z)-octadecadienoate + AH2 + O2 = (13R)-hydroxy-(9Z,11E)-octadecadienoate + A + H2O. It functions in the pathway lipid metabolism; prostaglandin biosynthesis. Dual cyclooxygenase and peroxidase in the biosynthesis pathway of prostanoids, a class of C20 oxylipins mainly derived from arachidonate ((5Z,8Z,11Z,14Z)-eicosatetraenoate, AA, C20:4(n-6)), with a particular role in the inflammatory response. The cyclooxygenase activity oxygenates AA to the hydroperoxy endoperoxide prostaglandin G2 (PGG2), and the peroxidase activity reduces PGG2 to the hydroxy endoperoxide prostaglandin H2 (PGH2), the precursor of all 2-series prostaglandins and thromboxanes. This complex transformation is initiated by abstraction of hydrogen at carbon 13 (with S-stereochemistry), followed by insertion of molecular O2 to form the endoperoxide bridge between carbon 9 and 11 that defines prostaglandins. The insertion of a second molecule of O2 (bis-oxygenase activity) yields a hydroperoxy group in PGG2 that is then reduced to PGH2 by two electrons. Similarly catalyzes successive cyclooxygenation and peroxidation of dihomo-gamma-linoleate (DGLA, C20:3(n-6)) and eicosapentaenoate (EPA, C20:5(n-3)) to corresponding PGH1 and PGH3, the precursors of 1- and 3-series prostaglandins. In an alternative pathway of prostanoid biosynthesis, converts 2-arachidonoyl lysophopholipids to prostanoid lysophopholipids, which are then hydrolyzed by intracellular phospholipases to release free prostanoids. Metabolizes 2-arachidonoyl glycerol yielding the glyceryl ester of PGH2, a process that can contribute to pain response. Generates lipid mediators from n-3 and n-6 polyunsaturated fatty acids (PUFAs) via a lipoxygenase-type mechanism. Oxygenates PUFAs to hydroperoxy compounds and then reduces them to corresponding alcohols. Plays a role in the generation of resolution phase interaction products (resolvins) during both sterile and infectious inflammation. Metabolizes docosahexaenoate (DHA, C22:6(n-3)) to 17R-HDHA, a precursor of the D-series resolvins (RvDs). As a component of the biosynthetic pathway of E-series resolvins (RvEs), converts eicosapentaenoate (EPA, C20:5(n-3)) primarily to 18S-HEPE that is further metabolized by ALOX5 and LTA4H to generate 18S-RvE1 and 18S-RvE2. In vascular endothelial cells, converts docosapentaenoate (DPA, C22:5(n-3)) to 13R-HDPA, a precursor for 13-series resolvins (RvTs) shown to activate macrophage phagocytosis during bacterial infection. In activated leukocytes, contributes to oxygenation of hydroxyeicosatetraenoates (HETE) to diHETES (5,15-diHETE and 5,11-diHETE). Can also use linoleate (LA, (9Z,12Z)-octadecadienoate, C18:2(n-6)) as substrate and produce hydroxyoctadecadienoates (HODEs) in a regio- and stereospecific manner, being (9R)-HODE ((9R)-hydroxy-(10E,12Z)-octadecadienoate) and (13S)-HODE ((13S)-hydroxy-(9Z,11E)-octadecadienoate) its major products. During neuroinflammation, plays a role in neuronal secretion of specialized preresolving mediators (SPMs) 15R-lipoxin A4 that regulates phagocytic microglia. The polypeptide is Prostaglandin G/H synthase 2 (PTGS2) (Neovison vison (American mink)).